The following is a 405-amino-acid chain: Tyrosine--tRNA ligase (405 aa).

Tyr-35 contributes to the L-tyrosine binding site. Residues 40-49 carry the 'HIGH' region motif; it reads ATSSSLHIGH. L-tyrosine is bound by residues Tyr-166 and Gln-170. The short motif at 226–230 is the 'KMSKS' region element; it reads KMGKS. Lys-229 is an ATP binding site. The S4 RNA-binding domain occupies 340–404; it reads VLLINLMLDS…VGKKKFLRIV (65 aa).

Belongs to the class-I aminoacyl-tRNA synthetase family. TyrS type 1 subfamily. As to quaternary structure, homodimer.

It is found in the cytoplasm. It carries out the reaction tRNA(Tyr) + L-tyrosine + ATP = L-tyrosyl-tRNA(Tyr) + AMP + diphosphate + H(+). Functionally, catalyzes the attachment of tyrosine to tRNA(Tyr) in a two-step reaction: tyrosine is first activated by ATP to form Tyr-AMP and then transferred to the acceptor end of tRNA(Tyr). The protein is Tyrosine--tRNA ligase of Borreliella afzelii (strain PKo) (Borrelia afzelii).